A 225-amino-acid polypeptide reads, in one-letter code: MGQKVNPIGLRIGITRNWDSVWFSKQDYIKNLHEDIKIRRFLQKKFKNASVVKIIIERFPEKINVNLHTSKPGMVIGQKGQNIEAVKQELKKFADKPIGMNIIEVKKPEIIAQAIAETVALQIEQRMPFRRVMKAELRRAMRGGVEGVKIQISGRLNGADMARTEKYMEGRVPLHTLRAKIDFGFKEALTTFGQIGVKVWTYTGDYFPTKEESDEDKYAVKRRTS.

Residues 38-106 (IRRFLQKKFK…PIGMNIIEVK (69 aa)) enclose the KH type-2 domain.

Belongs to the universal ribosomal protein uS3 family. Part of the 30S ribosomal subunit. Forms a tight complex with proteins S10 and S14.

Binds the lower part of the 30S subunit head. Binds mRNA in the 70S ribosome, positioning it for translation. The protein is Small ribosomal subunit protein uS3 of Leptospira biflexa serovar Patoc (strain Patoc 1 / Ames).